A 359-amino-acid polypeptide reads, in one-letter code: 3-dehydroquinate synthase (359 aa).

Residues 70 to 75, 105 to 109, 129 to 130, lysine 142, lysine 151, and 169 to 172 contribute to the NAD(+) site; these read DGEQYK, GVIGD, TT, and FYKT. Residues glutamate 184, histidine 247, and histidine 264 each coordinate Zn(2+).

Belongs to the sugar phosphate cyclases superfamily. Dehydroquinate synthase family. Co(2+) is required as a cofactor. Requires Zn(2+) as cofactor. NAD(+) serves as cofactor.

It is found in the cytoplasm. It carries out the reaction 7-phospho-2-dehydro-3-deoxy-D-arabino-heptonate = 3-dehydroquinate + phosphate. It functions in the pathway metabolic intermediate biosynthesis; chorismate biosynthesis; chorismate from D-erythrose 4-phosphate and phosphoenolpyruvate: step 2/7. In terms of biological role, catalyzes the conversion of 3-deoxy-D-arabino-heptulosonate 7-phosphate (DAHP) to dehydroquinate (DHQ). In Francisella tularensis subsp. holarctica (strain FTNF002-00 / FTA), this protein is 3-dehydroquinate synthase.